The sequence spans 328 residues: Delta-aminolevulinic acid dehydratase (328 aa).

Residues C122, C124, and C132 each contribute to the Zn(2+) site. K197 acts as the Schiff-base intermediate with substrate in catalysis. The 5-aminolevulinate site is built by R207 and R219. E235 lines the Mg(2+) pocket. K250 serves as the catalytic Schiff-base intermediate with substrate. Positions 276 and 315 each coordinate 5-aminolevulinate.

It belongs to the ALAD family. In terms of assembly, homooctamer. The cofactor is Zn(2+).

The catalysed reaction is 2 5-aminolevulinate = porphobilinogen + 2 H2O + H(+). It participates in porphyrin-containing compound metabolism; protoporphyrin-IX biosynthesis; coproporphyrinogen-III from 5-aminolevulinate: step 1/4. Catalyzes an early step in the biosynthesis of tetrapyrroles. Binds two molecules of 5-aminolevulinate per subunit, each at a distinct site, and catalyzes their condensation to form porphobilinogen. This is Delta-aminolevulinic acid dehydratase (hemB) from Halalkalibacterium halodurans (strain ATCC BAA-125 / DSM 18197 / FERM 7344 / JCM 9153 / C-125) (Bacillus halodurans).